The chain runs to 183 residues: ATP synthase subunit delta (183 aa).

It belongs to the ATPase delta chain family. As to quaternary structure, F-type ATPases have 2 components, F(1) - the catalytic core - and F(0) - the membrane proton channel. F(1) has five subunits: alpha(3), beta(3), gamma(1), delta(1), epsilon(1). F(0) has three main subunits: a(1), b(2) and c(10-14). The alpha and beta chains form an alternating ring which encloses part of the gamma chain. F(1) is attached to F(0) by a central stalk formed by the gamma and epsilon chains, while a peripheral stalk is formed by the delta and b chains.

The protein resides in the cell inner membrane. F(1)F(0) ATP synthase produces ATP from ADP in the presence of a proton or sodium gradient. F-type ATPases consist of two structural domains, F(1) containing the extramembraneous catalytic core and F(0) containing the membrane proton channel, linked together by a central stalk and a peripheral stalk. During catalysis, ATP synthesis in the catalytic domain of F(1) is coupled via a rotary mechanism of the central stalk subunits to proton translocation. Functionally, this protein is part of the stalk that links CF(0) to CF(1). It either transmits conformational changes from CF(0) to CF(1) or is implicated in proton conduction. The sequence is that of ATP synthase subunit delta from Ehrlichia canis (strain Jake).